The primary structure comprises 340 residues: Homeobox protein DBX2 (340 aa).

Positions 185-244 (GILRRAVFSEDQRKALEKMFQKQKYISKTDRKKLAINLGLKESQVKIWFQNRRMKWRNSK) form a DNA-binding region, homeobox. The disordered stretch occupies residues 283–313 (QQHPSPGWRENSPEPSERLIQGSPGAEALPP).

This sequence belongs to the H2.0 homeobox family.

The protein localises to the nucleus. The protein is Homeobox protein DBX2 (DBX2) of Bos taurus (Bovine).